Here is a 192-residue protein sequence, read N- to C-terminus: Actin, muscle (192 aa).

It belongs to the actin family.

The protein localises to the cytoplasm. It localises to the cytoskeleton. The catalysed reaction is ATP + H2O = ADP + phosphate + H(+). In terms of biological role, actins are highly conserved proteins that are involved in various types of cell motility and are ubiquitously expressed in all eukaryotic cells. In Chionoecetes opilio (Atlantic snow crab), this protein is Actin, muscle.